Here is a 448-residue protein sequence, read N- to C-terminus: B box and SPRY domain-containing protein (448 aa).

The segment covering 1–18 (MSSDVSGTESGSESGPES) has biased composition (low complexity). The segment at 1-58 (MSSDVSGTESGSESGPESVPEPVPEPGPEPESEPGPGPAPGPGPGPAPGPGPGLGREP) is disordered. The span at 19 to 51 (VPEPVPEPGPEPESEPGPGPAPGPGPGPAPGPG) shows a compositional bias: pro residues. The segment at 63-111 (QPCQLCPEHGKPLSWFCLSERRPVCATCAGFGGRCHRHRIRRAEEHAEE) adopts a B box-type zinc-finger fold. A B30.2/SPRY domain is found at 257–448 (SPLLTQLWAT…VADQVISIVC (192 aa)).

As to quaternary structure, interacts with TRPV5 and TRPV6. Interacts with YWHAZ/14-3-3 protein zeta. In terms of tissue distribution, predominantly expressed in testis. Expressed in brain at low levels.

Its subcellular location is the cytoplasm. The protein resides in the membrane. In terms of biological role, may regulate epithelial calcium transport by inhibiting TRPV5 activity. The sequence is that of B box and SPRY domain-containing protein (Bspry) from Rattus norvegicus (Rat).